Reading from the N-terminus, the 375-residue chain is Porin Omp2b (375 aa).

An N-terminal signal peptide occupies residues 1-22 (MNIKSLLLGSAAALVAASGAQA).

It belongs to the alphaproteobacteria porin family. As to quaternary structure, homotrimer.

The protein resides in the cell outer membrane. Forms passive diffusion pores that allow small molecular weight hydrophilic materials across the outer membrane. This is Porin Omp2b (omp2b) from Brucella suis.